Here is a 429-residue protein sequence, read N- to C-terminus: Serine--tRNA ligase (429 aa).

Position 229-231 (229-231 (TAE)) interacts with L-serine. An ATP-binding site is contributed by 260–262 (RSE). E283 contributes to the L-serine binding site. 347-350 (EISS) contributes to the ATP binding site. L-serine is bound at residue S383.

This sequence belongs to the class-II aminoacyl-tRNA synthetase family. Type-1 seryl-tRNA synthetase subfamily. In terms of assembly, homodimer. The tRNA molecule binds across the dimer.

The protein localises to the cytoplasm. It carries out the reaction tRNA(Ser) + L-serine + ATP = L-seryl-tRNA(Ser) + AMP + diphosphate + H(+). It catalyses the reaction tRNA(Sec) + L-serine + ATP = L-seryl-tRNA(Sec) + AMP + diphosphate + H(+). It participates in aminoacyl-tRNA biosynthesis; selenocysteinyl-tRNA(Sec) biosynthesis; L-seryl-tRNA(Sec) from L-serine and tRNA(Sec): step 1/1. Functionally, catalyzes the attachment of serine to tRNA(Ser). Is also able to aminoacylate tRNA(Sec) with serine, to form the misacylated tRNA L-seryl-tRNA(Sec), which will be further converted into selenocysteinyl-tRNA(Sec). This chain is Serine--tRNA ligase, found in Orientia tsutsugamushi (strain Ikeda) (Rickettsia tsutsugamushi).